A 218-amino-acid polypeptide reads, in one-letter code: Host range factor 1 (218 aa).

In terms of biological role, facilitates AcMNPV replication in two non-permissive cell lines, IPLB-Ld652Y and IPLB-LdFB. The protein is Host range factor 1 (HRF-1) of Lepidoptera (butterflies and moths).